Here is a 258-residue protein sequence, read N- to C-terminus: Tryptophan synthase alpha chain (258 aa).

Catalysis depends on proton acceptor residues E52 and D63.

The protein belongs to the TrpA family. As to quaternary structure, tetramer of two alpha and two beta chains.

The catalysed reaction is (1S,2R)-1-C-(indol-3-yl)glycerol 3-phosphate + L-serine = D-glyceraldehyde 3-phosphate + L-tryptophan + H2O. Its pathway is amino-acid biosynthesis; L-tryptophan biosynthesis; L-tryptophan from chorismate: step 5/5. In terms of biological role, the alpha subunit is responsible for the aldol cleavage of indoleglycerol phosphate to indole and glyceraldehyde 3-phosphate. The polypeptide is Tryptophan synthase alpha chain (Streptococcus pneumoniae (strain 70585)).